Here is a 336-residue protein sequence, read N- to C-terminus: Heme A synthase (336 aa).

The next 8 helical transmembrane spans lie at 12 to 32 (LKLW…VGGL), 97 to 117 (LLAR…TLYF), 130 to 150 (IFFL…SGLI), 161 to 181 (SIHL…ILDI), 194 to 214 (LFLL…AFLS), 256 to 276 (FLHR…NFIY), 285 to 305 (YVLF…ITLI), and 310 to 330 (ITYA…YFLI). His-258 is a heme binding site. Residue His-316 coordinates heme.

It belongs to the COX15/CtaA family. Type 2 subfamily. As to quaternary structure, interacts with CtaB. Heme b is required as a cofactor.

It is found in the cell membrane. It carries out the reaction Fe(II)-heme o + 2 A + H2O = Fe(II)-heme a + 2 AH2. Its pathway is porphyrin-containing compound metabolism; heme A biosynthesis; heme A from heme O: step 1/1. In terms of biological role, catalyzes the conversion of heme O to heme A by two successive hydroxylations of the methyl group at C8. The first hydroxylation forms heme I, the second hydroxylation results in an unstable dihydroxymethyl group, which spontaneously dehydrates, resulting in the formyl group of heme A. This chain is Heme A synthase, found in Pelagibacter ubique (strain HTCC1062).